Here is a 622-residue protein sequence, read N- to C-terminus: Mitochondrial distribution and morphology protein 34 (622 aa).

The SMP-LTD domain occupies 1 to 204 (MSFKVNWNSL…LPTLIHQLSL (204 aa)). Disordered regions lie at residues 364–393 (YSNK…DNTV), 442–468 (LETM…RAYQ), and 572–592 (LDGG…NFRP). Basic residues predominate over residues 372-385 (KPKRRRIKVHKKSK). Residues 446-455 (STGSSSSASS) show a composition bias toward low complexity. Positions 577–587 (NSANTNNSSGG) are enriched in polar residues.

It belongs to the MDM34 family. In terms of assembly, component of the ER-mitochondria encounter structure (ERMES) or MDM complex, composed of MMM1, MDM10, MDM12 and MDM34.

The protein resides in the mitochondrion outer membrane. Its function is as follows. Component of the ERMES/MDM complex, which serves as a molecular tether to connect the endoplasmic reticulum (ER) and mitochondria. Components of this complex are involved in the control of mitochondrial shape and protein biogenesis, and function in nonvesicular lipid trafficking between the ER and mitochondria. MDM34 is required for the interaction of the ER-resident membrane protein MMM1 and the outer mitochondrial membrane-resident beta-barrel protein MDM10. This chain is Mitochondrial distribution and morphology protein 34, found in Candida albicans (strain WO-1) (Yeast).